The chain runs to 340 residues: Spermidine synthase 2 (340 aa).

Residues 1 to 41 are disordered; the sequence is MSSTQEASVTDLPVKRPREAEEDNNGGAMETENGGGEIKEP. An N-acetylserine modification is found at Ser-2. In terms of domain architecture, PABS spans 49–286; that stretch reads PGWFSEISPM…GVIGFMLCSS (238 aa). Position 80 (Gln-80) interacts with S-adenosyl 3-(methylsulfanyl)propylamine. Tyr-110 lines the putrescine pocket. Residues Gln-111, Asp-135, Glu-155, 186-187, and Asp-205 each bind S-adenosyl 3-(methylsulfanyl)propylamine; that span reads DG. Catalysis depends on Asp-205, which acts as the Proton acceptor. Putrescine is bound by residues 205-208 and Tyr-274; that span reads DSSD.

It belongs to the spermidine/spermine synthase family. In terms of assembly, heterodimer. Component of a multiprotein complex. Interacts with SPMS and SPDSYN1.

It catalyses the reaction S-adenosyl 3-(methylsulfanyl)propylamine + putrescine = S-methyl-5'-thioadenosine + spermidine + H(+). It participates in amine and polyamine biosynthesis; spermidine biosynthesis; spermidine from putrescine: step 1/1. The chain is Spermidine synthase 2 (SPDSYN2) from Arabidopsis thaliana (Mouse-ear cress).